The following is a 530-amino-acid chain: CTP synthase (530 aa).

Residues 1–264 (MPKLIIVTGG…GDFLTRRLRL (264 aa)) are amidoligase domain. CTP is bound at residue Ser13. Ser13 contacts UTP. 14 to 19 (GVGKGV) serves as a coordination point for ATP. An L-glutamine-binding site is contributed by Tyr54. Asp71 serves as a coordination point for ATP. Positions 71 and 139 each coordinate Mg(2+). CTP is bound by residues 146 to 148 (DYE), 185 to 190 (KTKPLQ), and Lys221. UTP is bound by residues 185–190 (KTKPLQ) and Lys221. Residues 289–530 (SVGMCGKYVE…LLKAALFAKR (242 aa)) enclose the Glutamine amidotransferase type-1 domain. Gly351 serves as a coordination point for L-glutamine. The active-site Nucleophile; for glutamine hydrolysis is the Cys378. Residues 379-382 (FGMQ), Glu402, and Arg459 each bind L-glutamine. Residues His504 and Glu506 contribute to the active site.

Belongs to the CTP synthase family. In terms of assembly, homotetramer.

The enzyme catalyses UTP + L-glutamine + ATP + H2O = CTP + L-glutamate + ADP + phosphate + 2 H(+). It carries out the reaction L-glutamine + H2O = L-glutamate + NH4(+). It catalyses the reaction UTP + NH4(+) + ATP = CTP + ADP + phosphate + 2 H(+). It participates in pyrimidine metabolism; CTP biosynthesis via de novo pathway; CTP from UDP: step 2/2. With respect to regulation, allosterically activated by GTP, when glutamine is the substrate; GTP has no effect on the reaction when ammonia is the substrate. The allosteric effector GTP functions by stabilizing the protein conformation that binds the tetrahedral intermediate(s) formed during glutamine hydrolysis. Inhibited by the product CTP, via allosteric rather than competitive inhibition. In terms of biological role, catalyzes the ATP-dependent amination of UTP to CTP with either L-glutamine or ammonia as the source of nitrogen. Regulates intracellular CTP levels through interactions with the four ribonucleotide triphosphates. This is CTP synthase from Pyrobaculum aerophilum (strain ATCC 51768 / DSM 7523 / JCM 9630 / CIP 104966 / NBRC 100827 / IM2).